Consider the following 232-residue polypeptide: Putative N-acetylmannosamine-6-phosphate 2-epimerase (232 aa).

The protein belongs to the NanE family.

The catalysed reaction is an N-acyl-D-glucosamine 6-phosphate = an N-acyl-D-mannosamine 6-phosphate. Its pathway is amino-sugar metabolism; N-acetylneuraminate degradation; D-fructose 6-phosphate from N-acetylneuraminate: step 3/5. Converts N-acetylmannosamine-6-phosphate (ManNAc-6-P) to N-acetylglucosamine-6-phosphate (GlcNAc-6-P). The polypeptide is Putative N-acetylmannosamine-6-phosphate 2-epimerase (Borrelia garinii subsp. bavariensis (strain ATCC BAA-2496 / DSM 23469 / PBi) (Borreliella bavariensis)).